Reading from the N-terminus, the 242-residue chain is Uridylate kinase (242 aa).

ATP is bound by residues 15–18 (KISG), G58, and R62. Residues D77 and 139-146 (TGNPFFTT) contribute to the UMP site. Residues T166, Y172, and D175 each coordinate ATP.

It belongs to the UMP kinase family. In terms of assembly, homohexamer.

It localises to the cytoplasm. The catalysed reaction is UMP + ATP = UDP + ADP. The protein operates within pyrimidine metabolism; CTP biosynthesis via de novo pathway; UDP from UMP (UMPK route): step 1/1. Its activity is regulated as follows. Inhibited by UTP. Catalyzes the reversible phosphorylation of UMP to UDP. The protein is Uridylate kinase of Buchnera aphidicola subsp. Acyrthosiphon pisum (strain APS) (Acyrthosiphon pisum symbiotic bacterium).